An 86-amino-acid polypeptide reads, in one-letter code: NAD(P)H-quinone oxidoreductase subunit O (86 aa).

Belongs to the complex I NdhO subunit family. NDH-1 can be composed of about 15 different subunits; different subcomplexes with different compositions have been identified which probably have different functions.

The protein resides in the cellular thylakoid membrane. The enzyme catalyses a plastoquinone + NADH + (n+1) H(+)(in) = a plastoquinol + NAD(+) + n H(+)(out). It catalyses the reaction a plastoquinone + NADPH + (n+1) H(+)(in) = a plastoquinol + NADP(+) + n H(+)(out). Its function is as follows. NDH-1 shuttles electrons from an unknown electron donor, via FMN and iron-sulfur (Fe-S) centers, to quinones in the respiratory and/or the photosynthetic chain. The immediate electron acceptor for the enzyme in this species is believed to be plastoquinone. Couples the redox reaction to proton translocation, and thus conserves the redox energy in a proton gradient. Cyanobacterial NDH-1 also plays a role in inorganic carbon-concentration. This Prochlorococcus marinus (strain SARG / CCMP1375 / SS120) protein is NAD(P)H-quinone oxidoreductase subunit O.